The primary structure comprises 2329 residues: Pre-mRNA-splicing factor 8 homolog (2329 aa).

Positions 1–53 (MANYGGHPQTEPHAIPDSILEEKSRKWKQLQGKRYSEKKKFGMSDTQKEEMPP) are disordered. The span at 34–53 (RYSEKKKFGMSDTQKEEMPP) shows a compositional bias: basic and acidic residues. The segment at 804–1295 (TTVHWLESRR…KIQTRIKIGL (492 aa)) is reverse transcriptase homology domain. The segment at 1296–1570 (NSKMPSRFPP…TLKISLIQIF (275 aa)) is linker. An important for branch point selection region spans residues 1506 to 1519 (MKFKKLTNAQRSGL). Residues 1574 to 1745 (LWQKIHESVV…LRERIRKGLQ (172 aa)) form a restriction endonuclease homology domain region. The tract at residues 1760–2013 (NYGELFSNQI…ILGMEISAPS (254 aa)) is RNase H homology domain. Residues 2096–2227 (TYILPKNILK…LTAYKLTPSG (132 aa)) form the MPN domain.

As to quaternary structure, part of the U5 snRNP complex and of the U4/U6-U5 tri-snRNP complex.

The protein localises to the nucleus. In terms of biological role, functions as a scaffold that mediates the ordered assembly of spliceosomal proteins and snRNAs. Required for the assembly of the U4/U6-U5 tri-snRNP complex. Functions as a scaffold that positions spliceosomal U2, U5 and U6 snRNAs at splice sites on pre-mRNA substrates, so that splicing can occur. Interacts with both the 5' and the 3' splice site. This Caenorhabditis elegans protein is Pre-mRNA-splicing factor 8 homolog (prp-8).